Consider the following 339-residue polypeptide: Zinc metalloprotease MJ0392 (339 aa).

Transmembrane regions (helical) follow at residues 10 to 30 (IMGIPIELHITFILFLVVIIG) and 33 to 53 (IMNNSIFWAVLFILLFVSVVL). H54 serves as a coordination point for Zn(2+). E55 is a catalytic residue. H58 lines the Zn(2+) pocket. 2 helical membrane passes run 96-116 (IAGPLVSFIIGIVLLIVSQFF) and 125-145 (LLYTLSLLNLMLGGFNLIPAF). Residue D148 coordinates Zn(2+). Transmembrane regions (helical) follow at residues 180–200 (IMLLFGLLSMNIILILVSLFV) and 251–271 (YFGYPVVENGKLVGCIGIGNI). CBS domains follow at residues 226–281 (MTPN…VRDY) and 281–335 (YMEK…ELKE).

This sequence belongs to the peptidase M50B family. As to quaternary structure, monomer. Zn(2+) serves as cofactor.

It localises to the cell membrane. Inhibited by 1,10-phenanthroline. Functionally, a site-2 regulated intramembrane protease (S2P) that cleaves type-2 transmembrane proteins within their membrane-spanning domains; its endogenous substrate is unknown. Regulated intramembrane proteolysis (RIP) occurs when an extracytoplasmic signal triggers a concerted proteolytic cascade to transmit information and elicit cellular responses. A membrane-spanning regulatory substrate protein is first cut extracytoplasmically (site-1 protease, S1P), then within the membrane itself (site-2 protease, S2P, this enzyme), while cytoplasmic proteases finish degrading the regulatory protein, liberating the effector protein. Possible signals, S1P and substrates are unknown in this organism. This chain is Zinc metalloprotease MJ0392, found in Methanocaldococcus jannaschii (strain ATCC 43067 / DSM 2661 / JAL-1 / JCM 10045 / NBRC 100440) (Methanococcus jannaschii).